The primary structure comprises 209 residues: MAPTKTIKNKHAANKSGIKGSKDAERSRNDGVLKSKGKPKGKAHTLVTASKGRPNIQELIARKKKKKTYSEKELAIPELNMITPVGVTKPKGKKKGKVFVDDKESMATILAIVQAEKEGQIESKMIKARQMEEIREARRAEAEKKEAERKARLEETKDSLRKKRKRSKQSGGSKGDDDDDSRDVKEFSSAGTKAVKSKKKKSVSFAAPE.

2 disordered regions span residues 1-53 (MAPT…SKGR) and 135-209 (REAR…AAPE). 2 stretches are compositionally biased toward basic and acidic residues: residues 20 to 33 (GSKDAERSRNDGVL) and 135 to 159 (REARRAEAEKKEAERKARLEETKDS). A coiled-coil region spans residues 126–170 (IKARQMEEIREARRAEAEKKEAERKARLEETKDSLRKKRKRSKQS).

The protein belongs to the LOC1 family. In terms of assembly, component of the 66S pre-ribosomal particle.

It localises to the nucleus. The protein resides in the nucleolus. Functionally, required for efficient assembly and nuclear export of the 60S ribosomal subunit. This Neurospora crassa (strain ATCC 24698 / 74-OR23-1A / CBS 708.71 / DSM 1257 / FGSC 987) protein is 60S ribosomal subunit assembly/export protein loc-1 (loc-1).